Reading from the N-terminus, the 186-residue chain is MQPTHTLTRLTVIGKLIIASSFFLSLAVQAQQCGQTAPLINERLSYMKDVAGYKAENHLPIEDRIQEEKVINSAMAQAESLGLNGESIKPLMVAQINAAKAIQYRYRADWLSQPEPGWQPKPLDDVRANIGELSTKILEQIAEELKTCKPAEMGDKAHFINTIRQHNLTSADVEAIFSTFNQVKLK.

The first 30 residues, Met-1–Ala-30, serve as a signal peptide directing secretion. The Chorismate mutase domain occupies Gln-31 to Arg-107. Cys-33 and Cys-148 are oxidised to a cystine. Substrate is bound by residues Arg-43, Lys-54, Asp-63, Ala-99–Gln-103, and Arg-127.

In terms of assembly, homodimer.

The protein resides in the periplasm. It carries out the reaction chorismate = prephenate. The protein operates within metabolic intermediate biosynthesis; prephenate biosynthesis; prephenate from chorismate: step 1/1. In terms of biological role, catalyzes the Claisen rearrangement of chorismate to prephenate. May play some role in the pathogenicity. This Yersinia pestis protein is Secreted chorismate mutase (pheA2).